The primary structure comprises 204 residues: Inactive ribonuclease-like protein 9 (204 aa).

The signal sequence occupies residues 1 to 26 (MMRTLITTHPLLLLLLLQQLLQPVQL). Cystine bridges form between Cys97–Cys152, Cys115–Cys167, and Cys122–Cys129. Asn130 and Asn142 each carry an N-linked (GlcNAc...) asparagine glycan.

It belongs to the pancreatic ribonuclease family.

It localises to the secreted. Functionally, does not exhibit any ribonuclease activity. The polypeptide is Inactive ribonuclease-like protein 9 (RNASE9) (Chlorocebus pygerythrus (Vervet monkey)).